An 838-amino-acid chain; its full sequence is Semaphorin-4G (838 aa).

The first 17 residues, Met-1 to Ala-17, serve as a signal peptide directing secretion. The Extracellular portion of the chain corresponds to Val-18–Leu-675. A Sema domain is found at Arg-35–Leu-505. Residues Asn-55, Asn-111, and Asn-126 are each glycosylated (N-linked (GlcNAc...) asparagine). Cys-104 and Cys-115 form a disulfide bridge. Cystine bridges form between Cys-133/Cys-142, Cys-270/Cys-377, and Cys-294/Cys-337. Asn-388 carries an N-linked (GlcNAc...) asparagine glycan. In terms of domain architecture, PSI spans Ser-507 to Glu-558. Intrachain disulfides connect Cys-508-Cys-525 and Cys-517-Cys-534. N-linked (GlcNAc...) asparagine glycosylation is found at Asn-542 and Asn-598. Positions Pro-567–Thr-649 constitute an Ig-like C2-type domain. A disulfide bond links Cys-584 and Cys-632. The chain crosses the membrane as a helical span at residues Leu-676 to Leu-696. Topologically, residues Tyr-697 to Val-838 are cytoplasmic. A disordered region spans residues Ser-723–Leu-777. Residues Gly-736–Gly-745 show a composition bias toward acidic residues. Over residues Pro-763–Ala-775 the composition is skewed to pro residues. Phosphoserine is present on residues Ser-795 and Ser-837.

It belongs to the semaphorin family. Interacts with PLXNB2.

The protein resides in the cell membrane. In terms of biological role, cell surface receptor for PLXNB2. May play a role in axon guidance. The protein is Semaphorin-4G (SEMA4G) of Homo sapiens (Human).